A 468-amino-acid chain; its full sequence is 3-isopropylmalate dehydratase large subunit (468 aa).

Cys-347, Cys-407, and Cys-410 together coordinate [4Fe-4S] cluster.

This sequence belongs to the aconitase/IPM isomerase family. LeuC type 1 subfamily. As to quaternary structure, heterodimer of LeuC and LeuD. [4Fe-4S] cluster is required as a cofactor.

It carries out the reaction (2R,3S)-3-isopropylmalate = (2S)-2-isopropylmalate. It functions in the pathway amino-acid biosynthesis; L-leucine biosynthesis; L-leucine from 3-methyl-2-oxobutanoate: step 2/4. Functionally, catalyzes the isomerization between 2-isopropylmalate and 3-isopropylmalate, via the formation of 2-isopropylmaleate. This Prochlorococcus marinus (strain SARG / CCMP1375 / SS120) protein is 3-isopropylmalate dehydratase large subunit.